The sequence spans 702 residues: Transposon Tn7 transposition protein TnsB (702 aa).

The interval Met1 to Asp139 is DNA-binding domain 1 (DBD1). A DNA-binding region (H-T-H motif) is located at residues Val105–Arg124. Residues Ile137–Arg160 form a disordered region. Residues Tyr140–Val172 are linker 1. Residues Thr173–Tyr233 are DNA-binding domain 2 (DBD2). The tract at residues Pro234–Gly267 is linker 2. In terms of domain architecture, Integrase catalytic spans Gln262–Met480. The catalytic domain (CD) stretch occupies residues Ser268 to Phe582. The tract at residues Gln589–Ser702 is C-terminal domain. Residues Lys623–Ser702 form a disordered region.

As to quaternary structure, heteromer with TnsA.

Functionally, sequence-specific, DNA-binding protein required for Tn7 transposition. Recognizes sequences necessary for recombination at both left and right ends of Tn7 and, together with TnsA, forms the transposase. TnsB executes the 3'-DNA strand breakage and joining reactions. TnsB binding introduces DNA bending. There are 3 DNA-binding sites in the left and 4 in the right end of Tn7; as TnsB levels increase more TnsB is bound, suggesting high protein levels contribute to transposon immunity. Binding of TnsB to the transposon right end represses expression of the downstream transposition genes. TnsABC + TnsD promote high-frequency insertion of Tn7 into a specific target site known as att-Tn7 whereas TnsABC + TnsE promote low-frequency insertion into many different sites. The chain is Transposon Tn7 transposition protein TnsB from Escherichia coli.